Consider the following 348-residue polypeptide: MSTNHIQPLLDLLYQGKSLSREQAFEIFSALIRGEMSEATMAGMLVALKIRGETIDEISGAADAMRAAAKTFPYSNGDNLGNGIVDIVGTGGDGFNTINISTTAAFVAAAAGAKVAKHGNRSVSSKSGSSDLLAQFGIDLTMSPDTASRCLDALNLCFLFAPHYHGGVKHAGPVRQALKTRTLFNVLGPLINPARPEFMLLGVYSPELVLPIAKVLKALGTKRAMVVHGSGLDEVALHGNTLVAELKDGDIIEYQLTPADLGVPLAQISDLEGGEPAQNALITEAILRGRGTDAHANAVAINAGCALYVCGIADSVKAGTLLALSTIQSGKAFELLSQLAKVSSETKE.

Residues Gly-89, 92 to 93 (GD), Thr-97, 99 to 102 (NIST), 117 to 125 (KHGNRSVSS), and Ser-129 each bind 5-phospho-alpha-D-ribose 1-diphosphate. Residue Gly-89 coordinates anthranilate. Mg(2+) is bound at residue Ser-101. Anthranilate is bound at residue Asn-120. Arg-175 contributes to the anthranilate binding site. Mg(2+) contacts are provided by Asp-233 and Glu-234.

This sequence belongs to the anthranilate phosphoribosyltransferase family. As to quaternary structure, homodimer. The cofactor is Mg(2+).

The catalysed reaction is N-(5-phospho-beta-D-ribosyl)anthranilate + diphosphate = 5-phospho-alpha-D-ribose 1-diphosphate + anthranilate. It functions in the pathway amino-acid biosynthesis; L-tryptophan biosynthesis; L-tryptophan from chorismate: step 2/5. In terms of biological role, catalyzes the transfer of the phosphoribosyl group of 5-phosphorylribose-1-pyrophosphate (PRPP) to anthranilate to yield N-(5'-phosphoribosyl)-anthranilate (PRA). This Shewanella sp. (strain W3-18-1) protein is Anthranilate phosphoribosyltransferase.